The chain runs to 641 residues: Fructose-1,6-bisphosphatase class 3 (641 aa).

This sequence belongs to the FBPase class 3 family. The cofactor is Mn(2+).

It catalyses the reaction beta-D-fructose 1,6-bisphosphate + H2O = beta-D-fructose 6-phosphate + phosphate. It participates in carbohydrate biosynthesis; gluconeogenesis. This is Fructose-1,6-bisphosphatase class 3 from Latilactobacillus sakei subsp. sakei (strain 23K) (Lactobacillus sakei subsp. sakei).